Reading from the N-terminus, the 347-residue chain is MSEKFLYALARPFLFAIDPEAAHNLTLHALRRAASLGWTSAIAKPAHDPRTVMGITFPNPVGLAAGLDKDGAYIDGLATLGFGFIEVGTVTPHAQPGNPLPRMFRLPQANAIINRMGFNNGGVDAFVSNVQASRFYQNKEGILGLNIGKNADTPIERAVDDYLICLEKVYPYASYVTVNISSPNTKNLRQLQGASELDALLAQLKEAQQRLADQHQRYVPIALKIAPDIDTEQIQTIAQALLRHKMDGVIATNTTINREAVKNMKHAEEAGGLSGAPVFASSNAVIRALKAELGDALPIIGVGGILSGTDAQAKIAAGASLVQLYTGLIYRGPALIRECAAALRAPT.

FMN contacts are provided by residues 65–69 and threonine 89; that span reads AGLDK. Residue lysine 69 participates in substrate binding. Substrate is bound at residue 114 to 118; sequence NRMGF. FMN-binding residues include asparagine 146 and asparagine 179. Residue asparagine 179 participates in substrate binding. Serine 182 acts as the Nucleophile in catalysis. Asparagine 184 lines the substrate pocket. The FMN site is built by lysine 224 and threonine 252. 253–254 provides a ligand contact to substrate; sequence NT. FMN contacts are provided by residues glycine 275, glycine 304, and 325-326; that span reads YT.

The protein belongs to the dihydroorotate dehydrogenase family. Type 2 subfamily. As to quaternary structure, monomer. The cofactor is FMN.

Its subcellular location is the cell membrane. It carries out the reaction (S)-dihydroorotate + a quinone = orotate + a quinol. Its pathway is pyrimidine metabolism; UMP biosynthesis via de novo pathway; orotate from (S)-dihydroorotate (quinone route): step 1/1. Functionally, catalyzes the conversion of dihydroorotate to orotate with quinone as electron acceptor. The chain is Dihydroorotate dehydrogenase (quinone) from Herminiimonas arsenicoxydans.